The chain runs to 181 residues: Nucleoside diphosphate kinase, mitochondrial (181 aa).

A compositionally biased stretch (basic residues) spans 1-10 (MFRGGTHRLR). A disordered region spans residues 1 to 22 (MFRGGTHRLRGQPGLSLPHGPR). The N-terminal 24 residues, 1–24 (MFRGGTHRLRGQPGLSLPHGPRCY), are a transit peptide targeting the mitochondrion. The ATP site is built by lysine 40, phenylalanine 88, arginine 116, threonine 122, arginine 133, and asparagine 143. Catalysis depends on histidine 146, which acts as the Pros-phosphohistidine intermediate.

It belongs to the NDK family. Mg(2+) is required as a cofactor. As to expression, highest levels in the liver and kidney with lower levels in the heart, brain and breast muscle.

Its subcellular location is the mitochondrion intermembrane space. The protein resides in the mitochondrion matrix. It catalyses the reaction a 2'-deoxyribonucleoside 5'-diphosphate + ATP = a 2'-deoxyribonucleoside 5'-triphosphate + ADP. The catalysed reaction is a ribonucleoside 5'-diphosphate + ATP = a ribonucleoside 5'-triphosphate + ADP. With respect to regulation, feedback inhibition by ADP. Its function is as follows. Major role in the synthesis of nucleoside triphosphates other than ATP. The ATP gamma phosphate is transferred to the NDP beta phosphate via a ping-pong mechanism, using a phosphorylated active-site intermediate. Through the catalyzed exchange of gamma-phosphate between di- and triphosphonucleosides participates in regulation of intracellular nucleotide homeostasis. Binds to anionic phospholipids, predominantly to cardiolipin; the binding inhibits its phosphotransfer activity. Acts as a mitochondria-specific NDK coupled to respiration. Promotes the redistribution of cardiolipin between the mitochondrial inner membrane and outer membrane which is implicated in pro-apoptotic signaling. In Columba livia (Rock dove), this protein is Nucleoside diphosphate kinase, mitochondrial (NME4).